Here is a 65-residue protein sequence, read N- to C-terminus: uncharacterized protein (65 aa).

Residues 37–57 (ILAIMTSVLPVLLIYIIWIFI) traverse the membrane as a helical segment.

Its subcellular location is the cell membrane. This is an uncharacterized protein from Bacillus subtilis (strain 168).